The sequence spans 124 residues: Protein MGF 110-4L-B (124 aa).

The N-terminal stretch at 1–18 is a signal peptide; it reads MLVIFLGILGLLANQVLG. N64 carries an N-linked (GlcNAc...) asparagine; by host glycan. A Prevents secretion from ER motif is present at residues 121–124; sequence KEDL.

It belongs to the asfivirus MGF 110 family.

It is found in the virion. The protein localises to the host endoplasmic reticulum-Golgi intermediate compartment. In terms of biological role, causes the redistribution of lumenal ER protein to an enlarged ERGIC compartment. This African swine fever virus (isolate Portugal/Lis 57/1957) (ASFV) protein is Protein MGF 110-4L-B.